The primary structure comprises 336 residues: HTH-type transcriptional repressor PurR (336 aa).

Positions 2-56 (ATIKDVAKLAGVSTTTVSHVINKTRFVAEDTSKAVWDAIQQLNYSPSAVARSLKV) constitute an HTH lacI-type domain. A DNA-binding region (H-T-H motif) is located at residues 4–23 (IKDVAKLAGVSTTTVSHVIN). A DNA-binding region spans residues 48–56 (SAVARSLKV). Tyr73, Lys188, Phe219, and Asp273 together coordinate hypoxanthine.

Homodimer.

It participates in purine metabolism; purine nucleotide biosynthesis [regulation]. Its function is as follows. Is the main repressor of the genes involved in the de novo synthesis of purine nucleotides, regulating purB, purC, purEK, purF, purHD, purL, purMN and guaBA expression. PurR is allosterically activated to bind its cognate DNA by binding the purine corepressors, hypoxanthine or guanine, thereby effecting transcription repression. The chain is HTH-type transcriptional repressor PurR from Actinobacillus pleuropneumoniae serotype 5b (strain L20).